We begin with the raw amino-acid sequence, 232 residues long: tRNA (guanine-N(1)-)-methyltransferase (232 aa).

Residues Gly111 and Ile131–Leu136 contribute to the S-adenosyl-L-methionine site.

This sequence belongs to the RNA methyltransferase TrmD family. In terms of assembly, homodimer.

Its subcellular location is the cytoplasm. The catalysed reaction is guanosine(37) in tRNA + S-adenosyl-L-methionine = N(1)-methylguanosine(37) in tRNA + S-adenosyl-L-homocysteine + H(+). In terms of biological role, specifically methylates guanosine-37 in various tRNAs. In Bartonella tribocorum (strain CIP 105476 / IBS 506), this protein is tRNA (guanine-N(1)-)-methyltransferase.